Here is a 493-residue protein sequence, read N- to C-terminus: uncharacterized protein (493 aa).

A helical membrane pass occupies residues 10–30 (LVPSTRFALSLVMFFGCLVTY). N-linked (GlcNAc...) asparagine glycans are attached at residues asparagine 35, asparagine 47, and asparagine 69. 6 helical membrane passes run 85–105 (MVLS…GHLA), 112–132 (RVVF…PVAA), 144–164 (AAIG…WSVW), 175–195 (GVTY…SGFL), 205–225 (PSIF…WWYV), and 272–292 (AVWA…TMLV). The N-linked (GlcNAc...) asparagine glycan is linked to asparagine 305. 4 consecutive transmembrane segments (helical) span residues 311–331 (AVAS…GVLA), 348–368 (AAML…GYCG), 375–395 (VIIF…GFVV), and 406–426 (GTVM…SPAV). Residue asparagine 433 is glycosylated (N-linked (GlcNAc...) asparagine). Residues 441 to 461 (MVLWLTAGILTIGALLFSIFA) traverse the membrane as a helical segment.

This sequence belongs to the major facilitator superfamily. Sodium/anion cotransporter family.

It localises to the membrane. This is an uncharacterized protein from Caenorhabditis elegans.